The sequence spans 171 residues: S-ribosylhomocysteine lyase (171 aa).

Fe cation is bound by residues histidine 54, histidine 58, and cysteine 128.

It belongs to the LuxS family. Homodimer. The cofactor is Fe cation.

The enzyme catalyses S-(5-deoxy-D-ribos-5-yl)-L-homocysteine = (S)-4,5-dihydroxypentane-2,3-dione + L-homocysteine. Functionally, involved in the synthesis of autoinducer 2 (AI-2) which is secreted by bacteria and is used to communicate both the cell density and the metabolic potential of the environment. The regulation of gene expression in response to changes in cell density is called quorum sensing. Catalyzes the transformation of S-ribosylhomocysteine (RHC) to homocysteine (HC) and 4,5-dihydroxy-2,3-pentadione (DPD). The chain is S-ribosylhomocysteine lyase from Campylobacter curvus (strain 525.92).